The following is a 2302-amino-acid chain: Phosphatidylinositol phosphatase PTPRQ (2302 aa).

The N-terminal stretch at 1 to 18 (MMDFHFSFLFLLIGTSES) is a signal peptide. Over 19–1908 (QVDVSSSFDG…GEGLSERTVE (1890 aa)) the chain is Extracellular. N-linked (GlcNAc...) asparagine glycosylation occurs at Asn-54. 17 consecutive Fibronectin type-III domains span residues 60–155 (PPVF…TAES), 159–254 (KVVN…SSST), 310–398 (PPQN…PPDV), 401–501 (AVFD…PHND), 474–566 (GFYE…TVRT), 570–665 (VPSS…TPED), 670–759 (SPQD…TSET), 764–854 (APEN…TEED), 859–948 (PPQN…TPEG), 953–1053 (PPND…TDQD), 1058–1151 (PVGN…TEED), 1156–1243 (PPII…TDES), 1248–1341 (PPQN…TQES), 1345–1431 (AVRN…LPET), 1435–1539 (APTN…TLPG), 1544–1642 (PPEN…TLES), and 1647–1748 (PPNN…IKAP). Residues Asn-162, Asn-169, Asn-318, Asn-354, and Asn-389 are each glycosylated (N-linked (GlcNAc...) asparagine). N-linked (GlcNAc...) asparagine glycosylation is found at Asn-733 and Asn-746. Asn-904, Asn-998, Asn-1010, and Asn-1040 each carry an N-linked (GlcNAc...) asparagine glycan. 2 N-linked (GlcNAc...) asparagine glycosylation sites follow: Asn-1251 and Asn-1256. N-linked (GlcNAc...) asparagine glycosylation is present at Asn-1805. The helical transmembrane segment at 1909-1929 (IILSVTLCILSIILLGTAIFA) threads the bilayer. The Cytoplasmic segment spans residues 1930–2302 (FVRIRQKQKE…VELEWEETTM (373 aa)). Positions 2006-2262 (FQEEFSELPK…IFLHQCILDL (257 aa)) constitute a Tyrosine-protein phosphatase domain. Residue Cys-2203 is the Phosphocysteine intermediate of the active site.

This sequence belongs to the protein-tyrosine phosphatase family. Receptor class 2A subfamily. As to quaternary structure, interacts with TPRN. TPRN, CLIC5 and PTPQR form concentric rings at the base of stereocilia and may form a complex.

The protein resides in the cell projection. The protein localises to the stereocilium. It localises to the apical cell membrane. Its subcellular location is the basal cell membrane. It carries out the reaction a 1,2-diacyl-sn-glycero-3-phospho-(1D-myo-inositol-3,4,5-trisphosphate) + H2O = a 1,2-diacyl-sn-glycero-3-phospho-(1D-myo-inositol-4,5-bisphosphate) + phosphate. It catalyses the reaction a 1,2-diacyl-sn-glycero-3-phospho-(1D-myo-inositol-3,4,5-trisphosphate) + H2O = a 1,2-diacyl-sn-glycero-3-phospho-(1D-myo-inositol-3,4-bisphosphate) + phosphate. The enzyme catalyses a 1,2-diacyl-sn-glycero-3-phospho-(1D-myo-inositol-3,5-bisphosphate) + H2O = a 1,2-diacyl-sn-glycero-3-phospho-(1D-myo-inositol-5-phosphate) + phosphate. The catalysed reaction is a 1,2-diacyl-sn-glycero-3-phospho-(1D-myo-inositol-3,5-bisphosphate) + H2O = a 1,2-diacyl-sn-glycero-3-phospho-(1D-myo-inositol-3-phosphate) + phosphate. It carries out the reaction a 1,2-diacyl-sn-glycero-3-phospho-(1D-myo-inositol-4,5-bisphosphate) + H2O = a 1,2-diacyl-sn-glycero-3-phospho-(1D-myo-inositol 4-phosphate) + phosphate. Its function is as follows. Dephosphorylates phosphatidylinositol phosphates, such as phosphatidylinositol 3,4,5-trisphosphate (PIP3) and phosphatidylinositol 3,5-diphosphates, with preference for PIP3. Phosphate can be hydrolyzed from the D3 and D5 positions in the inositol ring. Has low tyrosine-protein phosphatase activity in vitro; however, the relevance of such activity in vivo is unclear. Plays an important role in adipogenesis of mesenchymal stem cells (MSCs). Regulates the phosphorylation state of AKT1 by regulating the levels of PIP3 level in MSCs and preadipocyte cells. Required for hair bundle maturation, a process that enables hair cells to detect and transmit sound and balance signals effectively, therefore affecting auditory function. May act by regulating the level of phosphatidylinositol 4,5-bisphosphate (PIP2) level in the basal region of hair bundles. The polypeptide is Phosphatidylinositol phosphatase PTPRQ (Ptprq) (Rattus norvegicus (Rat)).